A 78-amino-acid polypeptide reads, in one-letter code: MPVTKPYFVTVAVLLILVDKTTGGLFGLRSGKRREPWVSCELYQGSCRNACQKYEIQYLTCPKKRKCCLKFPMKITRV.

The first 23 residues, 1-23 (MPVTKPYFVTVAVLLILVDKTTG), serve as a signal peptide directing secretion. Intrachain disulfides connect cysteine 40-cysteine 67, cysteine 47-cysteine 61, and cysteine 51-cysteine 68.

This sequence belongs to the beta-defensin family.

The protein localises to the secreted. Functionally, has antibacterial activity. This Rattus norvegicus (Rat) protein is Beta-defensin 29 (Defb29).